The sequence spans 145 residues: MRVVIQRVNHAAVRIDGETVGQIQKGLLLLVGLAEGDGEEQVVKAADKIAKMRIFEDEAGKTNLGIKDVGGQILSVSQFTLLADTKRGNRPSFVHAMRPPKSSQLWEEFNQELVKRGLTVETGEFGADMKVELENDGPFTIVLDL.

A Gly-cisPro motif, important for rejection of L-amino acids motif is present at residues 137 to 138; that stretch reads GP.

It belongs to the DTD family. Homodimer.

The protein resides in the cytoplasm. The catalysed reaction is glycyl-tRNA(Ala) + H2O = tRNA(Ala) + glycine + H(+). The enzyme catalyses a D-aminoacyl-tRNA + H2O = a tRNA + a D-alpha-amino acid + H(+). In terms of biological role, an aminoacyl-tRNA editing enzyme that deacylates mischarged D-aminoacyl-tRNAs. Also deacylates mischarged glycyl-tRNA(Ala), protecting cells against glycine mischarging by AlaRS. Acts via tRNA-based rather than protein-based catalysis; rejects L-amino acids rather than detecting D-amino acids in the active site. By recycling D-aminoacyl-tRNA to D-amino acids and free tRNA molecules, this enzyme counteracts the toxicity associated with the formation of D-aminoacyl-tRNA entities in vivo and helps enforce protein L-homochirality. In Lactobacillus delbrueckii subsp. bulgaricus (strain ATCC 11842 / DSM 20081 / BCRC 10696 / JCM 1002 / NBRC 13953 / NCIMB 11778 / NCTC 12712 / WDCM 00102 / Lb 14), this protein is D-aminoacyl-tRNA deacylase.